The primary structure comprises 242 residues: uncharacterized protein (242 aa).

Residues 57–67 are compositionally biased toward polar residues; it reads SPTSQKTSASG. The disordered stretch occupies residues 57–78; sequence SPTSQKTSASGQEEPDPLHDKS. The DUF1279 domain occupies 76–188; the sequence is DKSSGLIQRF…GYMSTPPPVK (113 aa). The helical transmembrane segment at 92 to 114 threads the bilayer; sequence YGKVMIPVHLLTSTMWFGTFYYA. Residues 188 to 237 adopt a coiled-coil conformation; it reads KEYLQEKMEETKERISGKMEETKDRFSERMEETKDKFNEKLQETKDKVSF. Residues 198–236 are compositionally biased toward basic and acidic residues; it reads TKERISGKMEETKDRFSERMEETKDKFNEKLQETKDKVS. Positions 198 to 242 are disordered; sequence TKERISGKMEETKDRFSERMEETKDKFNEKLQETKDKVSFRKKKE.

It is found in the membrane. This is an uncharacterized protein from Danio rerio (Zebrafish).